Consider the following 75-residue polypeptide: U6-lycotoxin-Ls1c (75 aa).

Residues 1–21 (MKLLLFTALVLVVISLIEVEA) form the signal peptide. Residues 22–25 (ENER) constitute a propeptide that is removed on maturation. 4 disulfides stabilise this stretch: Cys-27/Cys-42, Cys-34/Cys-47, Cys-41/Cys-65, and Cys-49/Cys-63.

It belongs to the neurotoxin 19 (CSTX) family. 06 (U6-Lctx) subfamily. In terms of tissue distribution, expressed by the venom gland.

It localises to the secreted. This Lycosa singoriensis (Wolf spider) protein is U6-lycotoxin-Ls1c.